Consider the following 505-residue polypeptide: MIEPSMERENGALTAATTTTTAVTSPPPMASSPRQALVERLKDYGQEDIFSLWDELSPDEKDFLVRDIENLDLPRIDRIIRCSLHSQGLPVAAIEPVPENWVSTVDGRTMEDREKWWKMGLKTIYEGKLGVVLLSGGQGTRLGSSDPKGCFNIGLPSGKSLFQIQAERILCVQRLAAQVVSEGPIRPVTIHWYIMTSPFTDEATRKYFSSHKYFGLEPDQISFFQQGTLPCVTKDGKFIMETPFSLAKAPDGNGGVYAALKCSRLLEDMASRGIKYVDCYGVDNVLVRVADPTFLGYFIDKGAASAAKVVRKAYPQEQVGVFVRRGKGGPLTVVEYSELDQSMASAINQRTGRLQYCWSNVCLHMFTLDFLNQVATGLEKDSVYHLAEKKIPSMNGYTMGLKLEQFIFDSFPYAPSTALFEVLREEEFAPVKNVNGSNFDTPESARLLVLRLHTRWVIAAGGFLTHSVPLYATGVEVSPLCSYAGENLEAICRGRTFHAPCEISL.

The segment covering Met-1–Asn-10 has biased composition (basic and acidic residues). A disordered region spans residues Met-1 to Ser-32. Over residues Thr-14 to Thr-24 the composition is skewed to low complexity. The Substrate binding motif lies at Leu-134–Gly-137. Substrate is bound at residue Asn-253. Residues Glu-335–Tyr-336 carry the Substrate binding motif. Lys-432 is a substrate binding site.

Belongs to the UDPGP type 1 family. Monomer. Requires Mg(2+) as cofactor. Mn(2+) is required as a cofactor. Expressed in root tips, stipules and mature pollen grains.

The catalysed reaction is N-acetyl-alpha-D-glucosamine 1-phosphate + UTP + H(+) = UDP-N-acetyl-alpha-D-glucosamine + diphosphate. The enzyme catalyses N-acetyl-alpha-D-galactosamine 1-phosphate + UTP + H(+) = UDP-N-acetyl-alpha-D-galactosamine + diphosphate. It functions in the pathway nucleotide-sugar biosynthesis; UDP-N-acetyl-alpha-D-glucosamine biosynthesis; UDP-N-acetyl-alpha-D-glucosamine from N-acetyl-alpha-D-glucosamine 1-phosphate: step 1/1. With respect to regulation, inhibited by hygromycin and streptomycin, but not by gentamycin or kanamycin. Its function is as follows. Uridylyltransferase involved in the biosynthesis of UDP-glucosamine, an essential precursor for glycoprotein and glycolipid synthesis. Can use both UDP-glucosamine and the 4-epimer UDP-galactosamine as substrates, but no other sugars or NTPs. Acts redundantly with GLCNAC1PUT2. Required for gametogenesis and embryo development. The protein is UDP-N-acetylglucosamine diphosphorylase 1 (GLCNAC1PUT1) of Arabidopsis thaliana (Mouse-ear cress).